Here is a 331-residue protein sequence, read N- to C-terminus: Ketol-acid reductoisomerase (NADP(+)) (331 aa).

In terms of domain architecture, KARI N-terminal Rossmann spans 3–183; sequence AQMYYDDDAD…GGTRAGALKT (181 aa). Residues 26–29, Ser-52, and Ser-54 each bind NADP(+); that span reads YGSQ. His-109 is an active-site residue. Gly-135 lines the NADP(+) pocket. Residues 184–329 form the KARI C-terminal knotted domain; it reads TFKEETETDL…TELRSLMSWL (146 aa). The Mg(2+) site is built by Asp-192, Glu-196, Glu-228, and Glu-232. Ser-253 serves as a coordination point for substrate.

It belongs to the ketol-acid reductoisomerase family. It depends on Mg(2+) as a cofactor.

The enzyme catalyses (2R)-2,3-dihydroxy-3-methylbutanoate + NADP(+) = (2S)-2-acetolactate + NADPH + H(+). It carries out the reaction (2R,3R)-2,3-dihydroxy-3-methylpentanoate + NADP(+) = (S)-2-ethyl-2-hydroxy-3-oxobutanoate + NADPH + H(+). It participates in amino-acid biosynthesis; L-isoleucine biosynthesis; L-isoleucine from 2-oxobutanoate: step 2/4. It functions in the pathway amino-acid biosynthesis; L-valine biosynthesis; L-valine from pyruvate: step 2/4. In terms of biological role, involved in the biosynthesis of branched-chain amino acids (BCAA). Catalyzes an alkyl-migration followed by a ketol-acid reduction of (S)-2-acetolactate (S2AL) to yield (R)-2,3-dihydroxy-isovalerate. In the isomerase reaction, S2AL is rearranged via a Mg-dependent methyl migration to produce 3-hydroxy-3-methyl-2-ketobutyrate (HMKB). In the reductase reaction, this 2-ketoacid undergoes a metal-dependent reduction by NADPH to yield (R)-2,3-dihydroxy-isovalerate. In Thermobifida fusca (strain YX), this protein is Ketol-acid reductoisomerase (NADP(+)).